We begin with the raw amino-acid sequence, 125 residues long: Basic leucine zipper transcriptional factor ATF-like (125 aa).

The segment covering 1–14 (MPHSSDSSDSSFSR) has biased composition (low complexity). Residues 1-59 (MPHSSDSSDSSFSRSPPPGKQDSSDDVRKVQRREKNRIAAQKSRQRQTQKADTLHLESE) are disordered. Residues 26 to 89 (DVRKVQRREK…KYFTSVLSSH (64 aa)) form the bZIP domain. A basic motif region spans residues 28 to 50 (RKVQRREKNRIAAQKSRQRQTQK). The residue at position 43 (Ser43) is a Phosphoserine. Residue Thr48 is modified to Phosphothreonine. The leucine-zipper stretch occupies residues 54-75 (LHLESEDLEKQNAALRKEIKQL).

Belongs to the bZIP family. Heterodimer; mainly heterodimerizes with JUNB. The BATF-JUNB heterodimer interacts with IRF4 and IRF8. Interacts (via bZIP domain) with IRF4 and IRF8; the interaction is direct. Also forms heterodimers with JUN and JUND. Interacts with IFI35. Phosphorylated on serine and threonine residues and at least one tyrosine residue. Phosphorylation at Ser-43 inhibit DNA binding activity and transforms it as a negative regulator of AP-1 mediated transcription. Detected in postnatal and adult lymphoid tissues such as thymus, spleen and lymph nodes. In thymus most concentrated expression is found in the immediate cortical layer. Differentially expressed during T-cell development in thymus. Highly expressed in Th17, Th1 and Th2 cells and in activated B-cells.

It localises to the nucleus. The protein localises to the cytoplasm. Its function is as follows. AP-1 family transcription factor that controls the differentiation of lineage-specific cells in the immune system: specifically mediates the differentiation of T-helper 17 cells (Th17), follicular T-helper cells (TfH), CD8(+) dendritic cells and class-switch recombination (CSR) in B-cells. Acts via the formation of a heterodimer with JUNB that recognizes and binds DNA sequence 5'-TGA[CG]TCA-3'. The BATF-JUNB heterodimer also forms a complex with IRF4 (or IRF8) in immune cells, leading to recognition of AICE sequence (5'-TGAnTCA/GAAA-3'), an immune-specific regulatory element, followed by cooperative binding of BATF and IRF4 (or IRF8) and activation of genes. Controls differentiation of T-helper cells producing interleukin-17 (Th17 cells) by binding to Th17-associated gene promoters: regulates expression of the transcription factor RORC itself and RORC target genes such as IL17 (IL17A or IL17B). Also involved in differentiation of follicular T-helper cells (TfH) by directing expression of BCL6 and MAF. In B-cells, involved in class-switch recombination (CSR) by controlling the expression of both AICDA and of germline transcripts of the intervening heavy-chain region and constant heavy-chain region (I(H)-C(H)). Following infection, can participate in CD8(+) dendritic cell differentiation via interaction with IRF4 and IRF8 to mediate cooperative gene activation. Regulates effector CD8(+) T-cell differentiation by regulating expression of SIRT1. Following DNA damage, part of a differentiation checkpoint that limits self-renewal of hematopoietic stem cells (HSCs): up-regulated by STAT3, leading to differentiation of HSCs, thereby restricting self-renewal of HSCs. This chain is Basic leucine zipper transcriptional factor ATF-like (Batf), found in Mus musculus (Mouse).